The primary structure comprises 325 residues: Cln5-like protein 2 (325 aa).

Positions 1–19 (MNKLIFIIICLGIVDKTIS) are cleaved as a signal peptide. 8 N-linked (GlcNAc...) asparagine glycosylation sites follow: asparagine 88, asparagine 117, asparagine 133, asparagine 163, asparagine 182, asparagine 189, asparagine 238, and asparagine 262.

It belongs to the CLN5 family.

This Dictyostelium discoideum (Social amoeba) protein is Cln5-like protein 2 (cln5lb).